The primary structure comprises 224 residues: Small ribosomal subunit protein uS7 (224 aa).

The protein belongs to the universal ribosomal protein uS7 family. Part of the 30S ribosomal subunit.

Functionally, one of the primary rRNA binding proteins, it binds directly to 16S rRNA where it nucleates assembly of the head domain of the 30S subunit. Is located at the subunit interface close to the decoding center. The polypeptide is Small ribosomal subunit protein uS7 (Caldivirga maquilingensis (strain ATCC 700844 / DSM 13496 / JCM 10307 / IC-167)).